An 81-amino-acid polypeptide reads, in one-letter code: Photosystem I iron-sulfur center (81 aa).

2 consecutive 4Fe-4S ferredoxin-type domains span residues 2 to 31 (SHTVKIYDTCIGCTQCVRACPTDVLEMVPW) and 39 to 68 (VASSPRTEDCVGCKRCETACPTDFLSIRVY). 8 residues coordinate [4Fe-4S] cluster: C11, C14, C17, C21, C48, C51, C54, and C58.

As to quaternary structure, the cyanobacterial PSI reaction center is composed of one copy each of PsaA,B,C,D,E,F,I,J,K,L,M and X, and forms trimeric complexes. The cofactor is [4Fe-4S] cluster.

The protein resides in the cellular thylakoid membrane. The enzyme catalyses reduced [plastocyanin] + hnu + oxidized [2Fe-2S]-[ferredoxin] = oxidized [plastocyanin] + reduced [2Fe-2S]-[ferredoxin]. In terms of biological role, apoprotein for the two 4Fe-4S centers FA and FB of photosystem I (PSI); essential for photochemical activity. FB is the terminal electron acceptor of PSI, donating electrons to ferredoxin. The C-terminus interacts with PsaA/B/D and helps assemble the protein into the PSI complex. Required for binding of PsaD and PsaE to PSI. PSI is a plastocyanin/cytochrome c6-ferredoxin oxidoreductase, converting photonic excitation into a charge separation, which transfers an electron from the donor P700 chlorophyll pair to the spectroscopically characterized acceptors A0, A1, FX, FA and FB in turn. This is Photosystem I iron-sulfur center from Trichormus variabilis (strain ATCC 29413 / PCC 7937) (Anabaena variabilis).